The sequence spans 247 residues: Ubiquinone biosynthesis O-methyltransferase (247 aa).

S-adenosyl-L-methionine is bound by residues Arg-39, Gly-70, Asp-91, and Met-134.

This sequence belongs to the methyltransferase superfamily. UbiG/COQ3 family.

It catalyses the reaction a 3-demethylubiquinol + S-adenosyl-L-methionine = a ubiquinol + S-adenosyl-L-homocysteine + H(+). It carries out the reaction a 3-(all-trans-polyprenyl)benzene-1,2-diol + S-adenosyl-L-methionine = a 2-methoxy-6-(all-trans-polyprenyl)phenol + S-adenosyl-L-homocysteine + H(+). The protein operates within cofactor biosynthesis; ubiquinone biosynthesis. Functionally, O-methyltransferase that catalyzes the 2 O-methylation steps in the ubiquinone biosynthetic pathway. This chain is Ubiquinone biosynthesis O-methyltransferase, found in Cereibacter sphaeroides (strain ATCC 17029 / ATH 2.4.9) (Rhodobacter sphaeroides).